A 220-amino-acid polypeptide reads, in one-letter code: Ribosome maturation factor RimP (220 aa).

Residues 173 to 220 are disordered; that stretch reads KKDKEERRQRKKARRRGEKGGVGDDGTAGEEQPDSAREGPARSASEGE.

Belongs to the RimP family.

The protein resides in the cytoplasm. Required for maturation of 30S ribosomal subunits. In Chelativorans sp. (strain BNC1), this protein is Ribosome maturation factor RimP.